A 136-amino-acid polypeptide reads, in one-letter code: Ribosome-binding factor A (136 aa).

The disordered stretch occupies residues 1–22; it reads MNTAGPAGKLAGHAASGPTQRQ.

The protein belongs to the RbfA family. Monomer. Binds 30S ribosomal subunits, but not 50S ribosomal subunits or 70S ribosomes.

Its subcellular location is the cytoplasm. In terms of biological role, one of several proteins that assist in the late maturation steps of the functional core of the 30S ribosomal subunit. Associates with free 30S ribosomal subunits (but not with 30S subunits that are part of 70S ribosomes or polysomes). Required for efficient processing of 16S rRNA. May interact with the 5'-terminal helix region of 16S rRNA. The sequence is that of Ribosome-binding factor A from Gluconacetobacter diazotrophicus (strain ATCC 49037 / DSM 5601 / CCUG 37298 / CIP 103539 / LMG 7603 / PAl5).